Here is a 153-residue protein sequence, read N- to C-terminus: D-aminoacyl-tRNA deacylase (153 aa).

A Gly-cisPro motif, important for rejection of L-amino acids motif is present at residues 140-141 (GP).

It belongs to the DTD family. As to quaternary structure, homodimer.

The protein localises to the cytoplasm. The enzyme catalyses glycyl-tRNA(Ala) + H2O = tRNA(Ala) + glycine + H(+). It catalyses the reaction a D-aminoacyl-tRNA + H2O = a tRNA + a D-alpha-amino acid + H(+). Its function is as follows. An aminoacyl-tRNA editing enzyme that deacylates mischarged D-aminoacyl-tRNAs. Also deacylates mischarged glycyl-tRNA(Ala), protecting cells against glycine mischarging by AlaRS. Acts via tRNA-based rather than protein-based catalysis; rejects L-amino acids rather than detecting D-amino acids in the active site. By recycling D-aminoacyl-tRNA to D-amino acids and free tRNA molecules, this enzyme counteracts the toxicity associated with the formation of D-aminoacyl-tRNA entities in vivo and helps enforce protein L-homochirality. The chain is D-aminoacyl-tRNA deacylase from Trichodesmium erythraeum (strain IMS101).